The chain runs to 389 residues: Succinate--CoA ligase [ADP-forming] subunit beta (389 aa).

Residues 9–244 enclose the ATP-grasp domain; that stretch reads KELLRQFNVP…IDEEDAAEIE (236 aa). ATP-binding positions include Lys-46, 53 to 55, Glu-99, Ala-102, and Glu-107; that span reads GRG. Residues Asn-199 and Asp-213 each contribute to the Mg(2+) site. Residues Asn-264 and 321–323 each bind substrate; that span reads GIM.

This sequence belongs to the succinate/malate CoA ligase beta subunit family. In terms of assembly, heterotetramer of two alpha and two beta subunits. The cofactor is Mg(2+).

The catalysed reaction is succinate + ATP + CoA = succinyl-CoA + ADP + phosphate. It carries out the reaction GTP + succinate + CoA = succinyl-CoA + GDP + phosphate. The protein operates within carbohydrate metabolism; tricarboxylic acid cycle; succinate from succinyl-CoA (ligase route): step 1/1. Functionally, succinyl-CoA synthetase functions in the citric acid cycle (TCA), coupling the hydrolysis of succinyl-CoA to the synthesis of either ATP or GTP and thus represents the only step of substrate-level phosphorylation in the TCA. The beta subunit provides nucleotide specificity of the enzyme and binds the substrate succinate, while the binding sites for coenzyme A and phosphate are found in the alpha subunit. The protein is Succinate--CoA ligase [ADP-forming] subunit beta of Polynucleobacter necessarius subsp. necessarius (strain STIR1).